A 258-amino-acid polypeptide reads, in one-letter code: Transmembrane O-methyltransferase homolog (258 aa).

Residues Glu-104, 106-107 (GT), Ser-112, Glu-130, and Ser-160 each bind S-adenosyl-L-methionine.

Belongs to the class I-like SAM-binding methyltransferase superfamily. Cation-dependent O-methyltransferase family. Interacts with LHFPL5, PCDH15, TMC1, TMC2 and TMIE. The interaction of TOMT with TMC1 and TMC2 is required for the transportation of TMC1/2 into the stereocilia of hair cells. Interacts directly with TMC1. In terms of tissue distribution, widely expressed with high levels in outer and inner hair cells of the cochlea and vestibule.

The protein localises to the cytoplasm. It is found in the endoplasmic reticulum. It catalyses the reaction a catechol + S-adenosyl-L-methionine = a guaiacol + S-adenosyl-L-homocysteine + H(+). Catalyzes the O-methylation, and thereby the inactivation, of catecholamine neurotransmitters and catechol hormones. Required for auditory function. Component of the cochlear hair cell's mechanotransduction (MET) machinery. Involved in the assembly of the asymmetric tip-link MET complex. Required for transportation of TMC1 and TMC2 proteins into the mechanically sensitive stereocilia of the hair cells. The function in MET is independent of the enzymatic activity. The chain is Transmembrane O-methyltransferase homolog from Mus musculus (Mouse).